Here is a 590-residue protein sequence, read N- to C-terminus: Beta-fructofuranosidase, insoluble isoenzyme 4 (590 aa).

The first 28 residues, 1-28 (MVMAPIPQPWHQWPFLILFFLVLFSCES), serve as a signal peptide directing secretion. Residues 71 to 74 (WIND) and Gln-90 contribute to the substrate site. Asp-74 is an active-site residue. A glycan (N-linked (GlcNAc...) asparagine) is linked at Asn-94. Substrate contacts are provided by residues Trp-98 and 133–134 (WT). A glycan (N-linked (GlcNAc...) asparagine) is linked at Asn-167. 198 to 199 (RD) provides a ligand contact to substrate. N-linked (GlcNAc...) asparagine glycosylation is present at Asn-247. Glu-253 and Asp-287 together coordinate substrate. Residue Asn-345 is glycosylated (N-linked (GlcNAc...) asparagine). A disulfide bond links Cys-445 and Cys-491. N-linked (GlcNAc...) asparagine glycosylation occurs at Asn-565.

Belongs to the glycosyl hydrolase 32 family. As to expression, expressed in leaves. Expressed at moderate levels in roots and flowers, and weakly in seeds.

The protein localises to the secreted. It localises to the extracellular space. Its subcellular location is the apoplast. It is found in the cell wall. It catalyses the reaction Hydrolysis of terminal non-reducing beta-D-fructofuranoside residues in beta-D-fructofuranosides.. Functionally, may play a role in sucrose partitioning during seed development and in stress response. The sequence is that of Beta-fructofuranosidase, insoluble isoenzyme 4 (CIN4) from Oryza sativa subsp. japonica (Rice).